The chain runs to 476 residues: Transcriptional regulator claA (476 aa).

The zn(2)-C6 fungal-type DNA-binding region spans 25–52 (CDTCLKAKIKCSQAKPTCARCLQQGRQC). Residues 63–92 (PSTKNLPLDQLQQPKGRTAGGTARRSLSRR) are disordered. Residues 64–77 (STKNLPLDQLQQPK) show a composition bias toward polar residues.

The protein resides in the nucleus. In terms of biological role, transcriptional regulator; part of the cla gene cluster that produces clavatol and ortho-quinone methide. The clavatol biosynthesis cluster cla and the terrestric acid cluster tra are both involved in the production of peniphenones and penilactones. The polypeptide is Transcriptional regulator claA (Penicillium crustosum (Blue mold fungus)).